Here is a 398-residue protein sequence, read N- to C-terminus: G2/mitotic-specific cyclin-B2 (398 aa).

A Phosphothreonine modification is found at Thr8. Phosphoserine occurs at positions 11, 77, and 92. A Phosphothreonine modification is found at Thr94. Residues Ser99, Ser392, and Ser398 each carry the phosphoserine modification.

The protein belongs to the cyclin family. Cyclin AB subfamily. As to quaternary structure, interacts with the CDK1 protein kinase to form a serine/threonine kinase holoenzyme complex also known as maturation promoting factor (MPF). The cyclin subunit imparts substrate specificity to the complex.

In terms of biological role, essential for the control of the cell cycle at the G2/M (mitosis) transition. This Homo sapiens (Human) protein is G2/mitotic-specific cyclin-B2 (CCNB2).